A 140-amino-acid chain; its full sequence is Nucleoside diphosphate kinase (140 aa).

6 residues coordinate ATP: Lys11, Phe59, Arg87, Thr93, Arg104, and Asn114. The active-site Pros-phosphohistidine intermediate is His117.

This sequence belongs to the NDK family. As to quaternary structure, homotetramer. Requires Mg(2+) as cofactor.

The protein resides in the cytoplasm. The enzyme catalyses a 2'-deoxyribonucleoside 5'-diphosphate + ATP = a 2'-deoxyribonucleoside 5'-triphosphate + ADP. It carries out the reaction a ribonucleoside 5'-diphosphate + ATP = a ribonucleoside 5'-triphosphate + ADP. In terms of biological role, major role in the synthesis of nucleoside triphosphates other than ATP. The ATP gamma phosphate is transferred to the NDP beta phosphate via a ping-pong mechanism, using a phosphorylated active-site intermediate. The polypeptide is Nucleoside diphosphate kinase (Francisella tularensis subsp. tularensis (strain SCHU S4 / Schu 4)).